Reading from the N-terminus, the 857-residue chain is Envelope glycoprotein gp160 (857 aa).

Residues 1-22 (MDSRNQLIVAILLTSACLIYCA) form the signal peptide. Topologically, residues 23 to 671 (QYVTVFYGIP…LTSWIKYIQY (649 aa)) are extracellular. A glycan (N-linked (GlcNAc...) asparagine; by host) is linked at asparagine 36. Residues cysteine 43 and cysteine 56 are joined by a disulfide bond. Residues asparagine 69, asparagine 78, asparagine 113, asparagine 121, asparagine 134, asparagine 142, asparagine 159, asparagine 186, asparagine 198, asparagine 230, asparagine 233, asparagine 264, asparagine 270, asparagine 281, asparagine 292, asparagine 302, asparagine 358, asparagine 364, asparagine 391, asparagine 440, and asparagine 455 are each glycosylated (N-linked (GlcNAc...) asparagine; by host). 5 disulfides stabilise this stretch: cysteine 100/cysteine 206, cysteine 107/cysteine 197, cysteine 112/cysteine 156, cysteine 219/cysteine 249, and cysteine 229/cysteine 241. A V1 region spans residues 112–155 (CNSTSTESSNSTSEGSTVPEILNETTSCITNNSCSDLGSEEVVD). Positions 156–197 (CRFNMTGLQLDKPQQYSETWYSKDVVCDTTNGTSRKCYMNHC) are V2. The V3 stretch occupies residues 297–330 (CKRPGNKSVLPITLRSGRVFHSRPIINERPKQAW). Cysteine 297 and cysteine 331 are joined by a disulfide. Disulfide bonds link cysteine 383/cysteine 439 and cysteine 390/cysteine 412. A V4 region spans residues 390–412 (CNMTRFLNWIENRAHPQRNYAPC). The V5 stretch occupies residues 454 to 461 (DNQTSITF). The fusion peptide stretch occupies residues 504-524 (GVFVLGVLGFLATAGSAMGAA). The tract at residues 567–583 (LQTRVTAIEKYLRDQAR) is immunosuppression. N-linked (GlcNAc...) asparagine; by host glycans are attached at residues asparagine 603, asparagine 612, and asparagine 628. The stretch at 616-644 (QEWEQQTRDLEANISRSLEQAQIQQEKNM) forms a coiled coil. The segment at 649–670 (KLNSWDVFGNWFDLTSWIKYIQ) is MPER; binding to GalCer. Residues 672–692 (GVYVIIGIIALRIVIYVVQLL) traverse the membrane as a helical segment. Residues 693–857 (SRLRKGYRPV…IRQGAELALL (165 aa)) are Cytoplasmic-facing. Positions 699–702 (YRPV) match the YXXV motif; contains endocytosis signal motif. Cysteine 765 carries S-palmitoyl cysteine; by host lipidation. A Di-leucine internalization motif motif is present at residues 856–857 (LL).

The mature envelope protein (Env) consists of a homotrimer of non-covalently associated gp120-gp41 heterodimers. The resulting complex protrudes from the virus surface as a spike. There seems to be as few as 10 spikes on the average virion. Interacts with human CD4, CCR5 and CXCR4, to form a P4HB/PDI-CD4-CXCR4-gp120 complex. Gp120 also interacts with the C-type lectins CD209/DC-SIGN and CLEC4M/DC-SIGNR (collectively referred to as DC-SIGN(R)). Gp120 and gp41 interact with GalCer. As to quaternary structure, the mature envelope protein (Env) consists of a homotrimer of non-covalently associated gp120-gp41 heterodimers. The resulting complex protrudes from the virus surface as a spike. There seems to be as few as 10 spikes on the average virion. Specific enzymatic cleavages in vivo yield mature proteins. Envelope glycoproteins are synthesized as an inactive precursor that is heavily N-glycosylated and processed likely by host cell furin in the Golgi to yield the mature SU and TM proteins. The cleavage site between SU and TM requires the minimal sequence [KR]-X-[KR]-R. Post-translationally, palmitoylation of the transmembrane protein and of Env polyprotein (prior to its proteolytic cleavage) is essential for their association with host cell membrane lipid rafts. Palmitoylation is therefore required for envelope trafficking to classical lipid rafts, but not for viral replication.

The protein localises to the virion membrane. It is found in the host cell membrane. The protein resides in the host endosome membrane. The surface protein gp120 (SU) attaches the virus to the host lymphoid cell by binding to the primary receptor CD4. This interaction induces a structural rearrangement creating a high affinity binding site for a chemokine coreceptor like CXCR4 and/or CCR5. This peculiar 2 stage receptor-interaction strategy allows gp120 to maintain the highly conserved coreceptor-binding site in a cryptic conformation, protected from neutralizing antibodies. Since CD4 also displays a binding site for the disulfide-isomerase P4HB/PDI, a P4HB/PDI-CD4-CXCR4-gp120 complex may form. In that complex, P4HB/PDI could reach and reduce gp120 disulfide bonds, causing major conformational changes in gp120. TXN, another PDI family member could also be involved in disulfide rearrangements in Env during fusion. These changes are transmitted to the transmembrane protein gp41 and are thought to activate its fusogenic potential by unmasking its fusion peptide. Its function is as follows. The surface protein gp120 is a ligand for CD209/DC-SIGN and CLEC4M/DC-SIGNR, which are respectively found on dendritic cells (DCs), and on endothelial cells of liver sinusoids and lymph node sinuses. These interactions allow capture of viral particles at mucosal surfaces by these cells and subsequent transmission to permissive cells. DCs are professional antigen presenting cells, critical for host immunity by inducing specific immune responses against a broad variety of pathogens. They act as sentinels in various tissues where they take up antigen, process it, and present it to T-cells following migration to lymphoid organs. HIV subverts the migration properties of dendritic cells to gain access to CD4+ T-cells in lymph nodes. Virus transmission to permissive T-cells occurs either in trans (without DCs infection, through viral capture and transmission), or in cis (following DCs productive infection, through the usual CD4-gp120 interaction), thereby inducing a robust infection. In trans infection, bound virions remain infectious over days and it is proposed that they are not degraded, but protected in non-lysosomal acidic organelles within the DCs close to the cell membrane thus contributing to the viral infectious potential during DCs' migration from the periphery to the lymphoid tissues. On arrival at lymphoid tissues, intact virions recycle back to DCs' cell surface allowing virus transmission to CD4+ T-cells. Virion capture also seems to lead to MHC-II-restricted viral antigen presentation, and probably to the activation of HIV-specific CD4+ cells. In terms of biological role, the transmembrane protein gp41 (TM) acts as a class I viral fusion protein. Under the current model, the protein has at least 3 conformational states: pre-fusion native state, pre-hairpin intermediate state, and post-fusion hairpin state. During fusion of viral and target intracellular membranes, the coiled coil regions (heptad repeats) assume a trimer-of-hairpins structure, positioning the fusion peptide in close proximity to the C-terminal region of the ectodomain. The formation of this structure appears to drive apposition and subsequent fusion of viral and target cell membranes. Complete fusion occurs in host cell endosomes and is dynamin-dependent, however some lipid transfer might occur at the plasma membrane. The virus undergoes clathrin-dependent internalization long before endosomal fusion, thus minimizing the surface exposure of conserved viral epitopes during fusion and reducing the efficacy of inhibitors targeting these epitopes. Membranes fusion leads to delivery of the nucleocapsid into the cytoplasm. Functionally, the envelope glycoprotein gp160 precursor down-modulates cell surface CD4 antigen by interacting with it in the endoplasmic reticulum and blocking its transport to the cell surface. The gp120-gp41 heterodimer seems to contribute to T-cell depletion during HIV-1 infection. The envelope glycoproteins expressed on the surface of infected cells induce apoptosis through an interaction with uninfected cells expressing the receptor (CD4) and the coreceptors CXCR4 or CCR5. This type of bystander killing may be obtained by at least three distinct mechanisms. First, the interaction between the 2 cells can induce cellular fusion followed by nuclear fusion within the syncytium. Syncytia are condemned to die from apoptosis. Second, the 2 interacting cells may not fuse entirely and simply exchange plasma membrane lipids, after a sort of hemifusion process, followed by rapid death. Third, it is possible that virus-infected cells, on the point of undergoing apoptosis, fuse with CD4-expressing cells, in which case apoptosis is rapidly transmitted from one cell to the other and thus occurs in a sort of contagious fashion. Its function is as follows. The gp120-gp41 heterodimer allows rapid transcytosis of the virus through CD4 negative cells such as simple epithelial monolayers of the intestinal, rectal and endocervical epithelial barriers. Both gp120 and gp41 specifically recognize glycosphingolipids galactosyl-ceramide (GalCer) or 3' sulfo-galactosyl-ceramide (GalS) present in the lipid rafts structures of epithelial cells. Binding to these alternative receptors allows the rapid transcytosis of the virus through the epithelial cells. This transcytotic vesicle-mediated transport of virions from the apical side to the basolateral side of the epithelial cells does not involve infection of the cells themselves. The polypeptide is Envelope glycoprotein gp160 (env) (Human immunodeficiency virus type 2 subtype A (isolate KR) (HIV-2)).